Reading from the N-terminus, the 248-residue chain is Orotidine 5'-phosphate decarboxylase (248 aa).

Substrate-binding positions include Asp-22, Lys-44, 71 to 80 (DLKFHDIPNT), Thr-131, Arg-192, Gln-201, Gly-221, and Arg-222. Lys-73 (proton donor) is an active-site residue.

It belongs to the OMP decarboxylase family. Type 1 subfamily. Homodimer.

It catalyses the reaction orotidine 5'-phosphate + H(+) = UMP + CO2. It participates in pyrimidine metabolism; UMP biosynthesis via de novo pathway; UMP from orotate: step 2/2. In terms of biological role, catalyzes the decarboxylation of orotidine 5'-monophosphate (OMP) to uridine 5'-monophosphate (UMP). The sequence is that of Orotidine 5'-phosphate decarboxylase from Photorhabdus laumondii subsp. laumondii (strain DSM 15139 / CIP 105565 / TT01) (Photorhabdus luminescens subsp. laumondii).